A 143-amino-acid polypeptide reads, in one-letter code: Transcriptional regulator MraZ (143 aa).

2 consecutive SpoVT-AbrB domains span residues 5 to 47 (EFEH…PLSE) and 76 to 119 (AVQC…NKAR).

This sequence belongs to the MraZ family. As to quaternary structure, forms oligomers.

The protein resides in the cytoplasm. It localises to the nucleoid. This chain is Transcriptional regulator MraZ, found in Pediococcus pentosaceus (strain ATCC 25745 / CCUG 21536 / LMG 10740 / 183-1w).